We begin with the raw amino-acid sequence, 353 residues long: Phosphate acyltransferase (353 aa).

The protein belongs to the PlsX family. Homodimer. Probably interacts with PlsY.

It is found in the cytoplasm. It carries out the reaction a fatty acyl-[ACP] + phosphate = an acyl phosphate + holo-[ACP]. The protein operates within lipid metabolism; phospholipid metabolism. Catalyzes the reversible formation of acyl-phosphate (acyl-PO(4)) from acyl-[acyl-carrier-protein] (acyl-ACP). This enzyme utilizes acyl-ACP as fatty acyl donor, but not acyl-CoA. The protein is Phosphate acyltransferase of Agrobacterium fabrum (strain C58 / ATCC 33970) (Agrobacterium tumefaciens (strain C58)).